The following is a 301-amino-acid chain: uncharacterized protein (301 aa).

The protein belongs to the asfivirus E301R family. In terms of assembly, interacts with host IRF3.

In terms of biological role, plays a role in the inhibition of host innate immune system by acting as a negatively regulator of type I interferon production. Mechanistically, interacts with and prevents host IRF3 nuclear localization to inhibit its transcriptional activity. This is an uncharacterized protein from African swine fever virus (isolate Warthog/Namibia/Wart80/1980) (ASFV).